Reading from the N-terminus, the 343-residue chain is Protein RecA (343 aa).

64-71 (GPESSGKT) is an ATP binding site.

Belongs to the RecA family.

It is found in the cytoplasm. In terms of biological role, can catalyze the hydrolysis of ATP in the presence of single-stranded DNA, the ATP-dependent uptake of single-stranded DNA by duplex DNA, and the ATP-dependent hybridization of homologous single-stranded DNAs. It interacts with LexA causing its activation and leading to its autocatalytic cleavage. The chain is Protein RecA from Bacillus thuringiensis (strain Al Hakam).